The primary structure comprises 244 residues: tRNA pseudouridine synthase A (244 aa).

The active-site Nucleophile is aspartate 52. Substrate is bound at residue tyrosine 110.

The protein belongs to the tRNA pseudouridine synthase TruA family. In terms of assembly, homodimer.

It catalyses the reaction uridine(38/39/40) in tRNA = pseudouridine(38/39/40) in tRNA. Functionally, formation of pseudouridine at positions 38, 39 and 40 in the anticodon stem and loop of transfer RNAs. This chain is tRNA pseudouridine synthase A, found in Finegoldia magna (strain ATCC 29328 / DSM 20472 / WAL 2508) (Peptostreptococcus magnus).